The primary structure comprises 154 residues: Thioredoxin-like protein CXXS2 (154 aa).

Positions 23-148 (RRNKTQARSQ…LQKKTAAAAN (126 aa)) constitute a Thioredoxin domain. At Ser-31 the chain carries Phosphoserine.

Belongs to the thioredoxin family. Ubiquitous.

The protein resides in the cytoplasm. Possesses low disulfide reductase activity, but efficient protein disulfide isomerase activity. Does not possess deglutathionylation activity. The chain is Thioredoxin-like protein CXXS2 (CXXS2) from Arabidopsis thaliana (Mouse-ear cress).